Reading from the N-terminus, the 425-residue chain is Nuclear hormone receptor family member nhr-13 (425 aa).

The segment at residues 5 to 83 (PNSCEVCSSS…IGMKPLLVKS (79 aa)) is a DNA-binding region (nuclear receptor). 2 consecutive NR C4-type zinc fingers follow at residues 11 to 30 (CSSS…CKAC) and 46 to 71 (CIDQ…LKKC). The interval 108–148 (VKENSEEIQNDDDPQESDAEMENESTPGPSSEPSENVSAEN) is disordered. Over residues 113 to 130 (EEIQNDDDPQESDAEMEN) the composition is skewed to acidic residues. Residues 131 to 142 (ESTPGPSSEPSE) are compositionally biased toward low complexity. Positions 147–414 (ENQETVTKFL…KSMISLTSFW (268 aa)) constitute an NR LBD domain.

The protein belongs to the nuclear hormone receptor family. As to quaternary structure, may interact with nuclear hormone receptor nhr-49.

The protein resides in the nucleus. Orphan nuclear receptor. Involved in regulating fatty acid desaturase genes, acting in concert with nuclear hormone receptor nhr-49. The sequence is that of Nuclear hormone receptor family member nhr-13 (nhr-13) from Caenorhabditis elegans.